The sequence spans 292 residues: Elongation factor Ts (292 aa).

Residues 82 to 85 (TDFV) form an involved in Mg(2+) ion dislocation from EF-Tu region.

This sequence belongs to the EF-Ts family.

Its subcellular location is the cytoplasm. Functionally, associates with the EF-Tu.GDP complex and induces the exchange of GDP to GTP. It remains bound to the aminoacyl-tRNA.EF-Tu.GTP complex up to the GTP hydrolysis stage on the ribosome. The sequence is that of Elongation factor Ts from Legionella pneumophila (strain Lens).